The sequence spans 234 residues: Ubiquinone biosynthesis O-methyltransferase (234 aa).

Positions 37, 56, 77, and 121 each coordinate S-adenosyl-L-methionine.

Belongs to the methyltransferase superfamily. UbiG/COQ3 family.

It catalyses the reaction a 3-demethylubiquinol + S-adenosyl-L-methionine = a ubiquinol + S-adenosyl-L-homocysteine + H(+). The enzyme catalyses a 3-(all-trans-polyprenyl)benzene-1,2-diol + S-adenosyl-L-methionine = a 2-methoxy-6-(all-trans-polyprenyl)phenol + S-adenosyl-L-homocysteine + H(+). It participates in cofactor biosynthesis; ubiquinone biosynthesis. O-methyltransferase that catalyzes the 2 O-methylation steps in the ubiquinone biosynthetic pathway. This is Ubiquinone biosynthesis O-methyltransferase from Aromatoleum aromaticum (strain DSM 19018 / LMG 30748 / EbN1) (Azoarcus sp. (strain EbN1)).